We begin with the raw amino-acid sequence, 277 residues long: 4-hydroxy-tetrahydrodipicolinate reductase (277 aa).

NAD(+) is bound by residues 11–16 and 110–112; these read GALGRM and GTT. Histidine 166 serves as the catalytic Proton donor/acceptor. A (S)-2,3,4,5-tetrahydrodipicolinate-binding site is contributed by histidine 167. Lysine 170 functions as the Proton donor in the catalytic mechanism. (S)-2,3,4,5-tetrahydrodipicolinate is bound at residue 176–177; it reads GT.

It belongs to the DapB family.

Its subcellular location is the cytoplasm. The enzyme catalyses (S)-2,3,4,5-tetrahydrodipicolinate + NAD(+) + H2O = (2S,4S)-4-hydroxy-2,3,4,5-tetrahydrodipicolinate + NADH + H(+). It carries out the reaction (S)-2,3,4,5-tetrahydrodipicolinate + NADP(+) + H2O = (2S,4S)-4-hydroxy-2,3,4,5-tetrahydrodipicolinate + NADPH + H(+). It functions in the pathway amino-acid biosynthesis; L-lysine biosynthesis via DAP pathway; (S)-tetrahydrodipicolinate from L-aspartate: step 4/4. In terms of biological role, catalyzes the conversion of 4-hydroxy-tetrahydrodipicolinate (HTPA) to tetrahydrodipicolinate. In Synechococcus sp. (strain CC9902), this protein is 4-hydroxy-tetrahydrodipicolinate reductase.